The primary structure comprises 417 residues: Phosphoglycerate kinase (417 aa).

Positions 23, 24, 25, 26, 38, 39, 62, 63, 65, 66, 122, 123, 170, and 171 each coordinate (2R)-3-phosphoglycerate. Gly214 contacts ADP. Residue Gly214 coordinates CDP. Residues Ala215 and Lys216 each coordinate AMP. ATP is bound at residue Ala215. Ala215 lines the Mg(2+) pocket. Asp219 is a CDP binding site. Mg(2+) is bound at residue Asp219. Lys220 lines the AMP pocket. Lys220 serves as a coordination point for ATP. Gly238 provides a ligand contact to ADP. Gly238 contributes to the CDP binding site. Positions 239 and 313 each coordinate AMP. The ATP site is built by Gly239 and Gly313. 3 residues coordinate CDP: Gly338, Val340, and Phe343. Residue Phe343 coordinates ADP. Glu344 provides a ligand contact to AMP. ATP-binding residues include Glu344, Asp375, and Thr376. Asp375 lines the Mg(2+) pocket.

The protein belongs to the phosphoglycerate kinase family. Monomer. Mg(2+) serves as cofactor.

The protein localises to the cytoplasm. It catalyses the reaction (2R)-3-phosphoglycerate + ATP = (2R)-3-phospho-glyceroyl phosphate + ADP. It functions in the pathway carbohydrate degradation; glycolysis; pyruvate from D-glyceraldehyde 3-phosphate: step 2/5. Catalyzes one of the two ATP producing reactions in the glycolytic pathway via the reversible conversion of 1,3-diphosphoglycerate to 3-phosphoglycerate. In addition to its role as a glycolytic enzyme, it seems that PGK-1 acts as a polymerase alpha cofactor protein (primer recognition protein). May play a role in sperm motility. The protein is Phosphoglycerate kinase (PGK) of Gallus gallus (Chicken).